We begin with the raw amino-acid sequence, 100 residues long: Urease subunit gamma (100 aa).

This sequence belongs to the urease gamma subunit family. As to quaternary structure, heterotrimer of UreA (gamma), UreB (beta) and UreC (alpha) subunits. Three heterotrimers associate to form the active enzyme.

Its subcellular location is the cytoplasm. The catalysed reaction is urea + 2 H2O + H(+) = hydrogencarbonate + 2 NH4(+). It participates in nitrogen metabolism; urea degradation; CO(2) and NH(3) from urea (urease route): step 1/1. This is Urease subunit gamma from Rhodococcus opacus (strain B4).